Reading from the N-terminus, the 410-residue chain is Lysosome-associated membrane glycoprotein 2 (410 aa).

The signal sequence occupies residues 1–28 (MMCFRLSPVSGSGLVLSCLLLGAVQSYA). The tract at residues 29–192 (FELNLPDSKA…SKEEFVCEED (164 aa)) is first lumenal domain. The Lumenal segment spans residues 29-375 (FELNLPDSKA…QDCSADEDNF (347 aa)). Cys-40 and Cys-79 form a disulfide bridge. N-linked (GlcNAc...) asparagine glycans are attached at residues Asn-48, Asn-58, Asn-71, Asn-75, Asn-99, Asn-119, Asn-123, Asn-179, Asn-222, Asn-229, Asn-242, Asn-260, Asn-275, Asn-300, Asn-307, Asn-317, and Asn-356. Cys-153 and Cys-189 are disulfide-bonded. Positions 193–228 (KSVTTVRPIIHTTVPPPTTTPTPLPPKVGNYSVSNG) are hinge. The second lumenal domain stretch occupies residues 229–375 (NATCLLATMG…QDCSADEDNF (147 aa)). Cys-232 and Cys-265 are oxidised to a cystine. A disulfide bridge links Cys-331 with Cys-368. The helical transmembrane segment at 376 to 399 (LVPIAVGAALAGVLALVLLAYFIG) threads the bilayer. The Cytoplasmic segment spans residues 400-410 (LKRHHTGYEQF). An important for binding and subsequent lysosomal degradation of target proteins region spans residues 401–404 (KRHH).

It belongs to the LAMP family. Monomer. Forms large homooligomers. Interacts (via its cytoplasmic region) with HSPA8; HSPA8 mediates recruitment of proteins with a KFERQ motif to the surface of the lysosome for chaperone-mediated autophagy. Interacts with HSP90 in the lysosome lumen; this enhances LAMP2 stability. Interacts with MLLT11. Interacts with ABCB9. Interacts with FURIN. Interacts with CT55; this interaction may be important for LAMP2 protein stability. Interacts with TMEM175; inhibiting the proton channel activity of TMEM175. Forms a ternary complex with RAB7A and RUFY4 (via RUN domain); the interaction with RAB7A is mediated by RUFY4 (via RUN and coiled coil domains). Extensively N-glycosylated. Contains a minor proportion of O-linked glycans.

It is found in the lysosome membrane. Its subcellular location is the endosome membrane. The protein resides in the cell membrane. The protein localises to the cytoplasmic vesicle. It localises to the autophagosome membrane. Lysosomal membrane glycoprotein which plays an important role in lysosome biogenesis, lysosomal pH regulation and autophagy. Acts as an important regulator of lysosomal lumen pH regulation by acting as a direct inhibitor of the proton channel TMEM175, facilitating lysosomal acidification for optimal hydrolase activity. Plays an important role in chaperone-mediated autophagy, a process that mediates lysosomal degradation of proteins in response to various stresses and as part of the normal turnover of proteins with a long biological half-live. Functions by binding target proteins, such as GAPDH, NLRP3 and MLLT11, and targeting them for lysosomal degradation. In the chaperone-mediated autophagy, acts downstream of chaperones, such as HSPA8/HSC70, which recognize and bind substrate proteins and mediate their recruitment to lysosomes, where target proteins bind LAMP2. Plays a role in lysosomal protein degradation in response to starvation. Required for the fusion of autophagosomes with lysosomes during autophagy. Cells that lack LAMP2 express normal levels of VAMP8, but fail to accumulate STX17 on autophagosomes, which is the most likely explanation for the lack of fusion between autophagosomes and lysosomes. Required for normal degradation of the contents of autophagosomes. Required for efficient MHC class II-mediated presentation of exogenous antigens via its function in lysosomal protein degradation; antigenic peptides generated by proteases in the endosomal/lysosomal compartment are captured by nascent MHC II subunits. Is not required for efficient MHC class II-mediated presentation of endogenous antigens. This chain is Lysosome-associated membrane glycoprotein 2 (LAMP2), found in Cricetulus griseus (Chinese hamster).